The chain runs to 237 residues: Probable transcriptional regulatory protein PSHAa1370 (237 aa).

The protein belongs to the TACO1 family.

It localises to the cytoplasm. The protein is Probable transcriptional regulatory protein PSHAa1370 of Pseudoalteromonas translucida (strain TAC 125).